A 428-amino-acid polypeptide reads, in one-letter code: Ectoine/5-hydroxyectoine TRAP transporter large permease protein UehC (428 aa).

12 consecutive transmembrane segments (helical) span residues 9 to 29 (MIVL…GAFI), 49 to 69 (LAGI…AADI), 99 to 119 (AAAC…VVAI), 139 to 159 (ALIV…GMII), 172 to 192 (FIAG…YAYI), 217 to 237 (ALWP…GVFS), 242 to 262 (AAAC…SMSL), 273 to 293 (GLIT…SWVI), 302 to 322 (ILGA…VISI), 324 to 344 (FFIG…VPVF), 366 to 386 (VAIG…IAVF), and 400 to 420 (FILM…IALF).

Belongs to the TRAP transporter large permease family. As to quaternary structure, the complex comprises the extracytoplasmic solute receptor protein UehA, and the two transmembrane proteins UehB and UehC.

The protein resides in the cell inner membrane. Functionally, part of the tripartite ATP-independent periplasmic (TRAP) transport system UehABC, which imports both ectoine and 5-hydroxyectoine as nutrients, and not as osmoprotectants. This chain is Ectoine/5-hydroxyectoine TRAP transporter large permease protein UehC, found in Ruegeria pomeroyi (strain ATCC 700808 / DSM 15171 / DSS-3) (Silicibacter pomeroyi).